A 284-amino-acid polypeptide reads, in one-letter code: Zinc finger protein ZAT3 (284 aa).

Positions 1–12 (MNNNHSYDDRSF) are enriched in basic and acidic residues. The segment at 1-76 (MNNNHSYDDR…KPDPNAPKIT (76 aa)) is disordered. Residues 18–37 (PSNTSNPNPNLQFALSSSYD) are compositionally biased toward polar residues. Positions 47–62 (TVASSSSSSPKSASKP) are enriched in low complexity. 3 consecutive C2H2-type zinc fingers follow at residues 77–99 (RPCT…MRCH), 162–184 (FECG…RASH), and 222–244 (HKCN…MRCH).

As to quaternary structure, interacts (via the EAR motif) with TPL. As to expression, expressed exclusively in pollen.

Its subcellular location is the nucleus. Mediates the regulation of male germ cell division by DUO1. This Arabidopsis thaliana (Mouse-ear cress) protein is Zinc finger protein ZAT3.